The primary structure comprises 242 residues: Protein MHF1 homolog (242 aa).

The disordered stretch occupies residues 208–242; that stretch reads LKAKEPQSERKRKKGSAKKEDKASSSNAVRITTDL. The segment covering 231–242 has biased composition (polar residues); the sequence is SSSNAVRITTDL.

It belongs to the TAF9 family. CENP-S/MHF1 subfamily.

The protein localises to the nucleus. Its function is as follows. Involved in the promotion of spontaneous somatic homologous recombination (HR) events, which is opposite to the function of FANCM in ordered HR. Only FANCM is essential for replicative repair in the absence of the endonuclease MUS81. Acts in the same pathway as FANCM to restrain class II meiotic crossing over (CO), and acts with FANCM during meiosis to repair interstrand cross-links (ICLs). This common pathway between MHF1 and FANCM is in parallel to the pathway that involves the RECQ4A helicase. The protein is Protein MHF1 homolog of Arabidopsis thaliana (Mouse-ear cress).